A 296-amino-acid chain; its full sequence is 4-diphosphocytidyl-2-C-methyl-D-erythritol kinase (296 aa).

Lys-18 is a catalytic residue. An ATP-binding site is contributed by Pro-102 to Ser-112. Residue Asp-144 is part of the active site.

Belongs to the GHMP kinase family. IspE subfamily.

The enzyme catalyses 4-CDP-2-C-methyl-D-erythritol + ATP = 4-CDP-2-C-methyl-D-erythritol 2-phosphate + ADP + H(+). Its pathway is isoprenoid biosynthesis; isopentenyl diphosphate biosynthesis via DXP pathway; isopentenyl diphosphate from 1-deoxy-D-xylulose 5-phosphate: step 3/6. Functionally, catalyzes the phosphorylation of the position 2 hydroxy group of 4-diphosphocytidyl-2C-methyl-D-erythritol. The protein is 4-diphosphocytidyl-2-C-methyl-D-erythritol kinase of Vibrio atlanticus (strain LGP32) (Vibrio splendidus (strain Mel32)).